The following is a 202-amino-acid chain: Protein-methionine-sulfoxide reductase heme-binding subunit MsrQ (202 aa).

6 helical membrane passes run 8 to 28 (LAVF…AWIF), 42 to 62 (LGLG…LQKL), 75 to 95 (LGLW…VFIL), 110 to 130 (PYII…ITSN), 147 to 167 (LVYL…RADL), and 169 to 189 (EWTL…PSIA).

The protein belongs to the MsrQ family. In terms of assembly, heterodimer of a catalytic subunit (MsrP) and a heme-binding subunit (MsrQ). The cofactor is FMN. Heme b serves as cofactor.

The protein localises to the cell inner membrane. Functionally, part of the MsrPQ system that repairs oxidized periplasmic proteins containing methionine sulfoxide residues (Met-O), using respiratory chain electrons. Thus protects these proteins from oxidative-stress damage caused by reactive species of oxygen and chlorine generated by the host defense mechanisms. MsrPQ is essential for the maintenance of envelope integrity under bleach stress, rescuing a wide series of structurally unrelated periplasmic proteins from methionine oxidation. MsrQ provides electrons for reduction to the reductase catalytic subunit MsrP, using the quinone pool of the respiratory chain. This Pseudomonas paraeruginosa (strain DSM 24068 / PA7) (Pseudomonas aeruginosa (strain PA7)) protein is Protein-methionine-sulfoxide reductase heme-binding subunit MsrQ.